Here is a 249-residue protein sequence, read N- to C-terminus: Ribosomal RNA small subunit methyltransferase J (249 aa).

S-adenosyl-L-methionine-binding positions include 99-100, 115-116, 151-152, and Asp-169; these read RD, ER, and SS.

The protein belongs to the methyltransferase superfamily. RsmJ family.

The protein resides in the cytoplasm. The enzyme catalyses guanosine(1516) in 16S rRNA + S-adenosyl-L-methionine = N(2)-methylguanosine(1516) in 16S rRNA + S-adenosyl-L-homocysteine + H(+). Specifically methylates the guanosine in position 1516 of 16S rRNA. In Shewanella oneidensis (strain ATCC 700550 / JCM 31522 / CIP 106686 / LMG 19005 / NCIMB 14063 / MR-1), this protein is Ribosomal RNA small subunit methyltransferase J.